A 155-amino-acid polypeptide reads, in one-letter code: Small ribosomal subunit protein uS7 (155 aa).

The protein belongs to the universal ribosomal protein uS7 family. As to quaternary structure, part of the 30S ribosomal subunit. Contacts proteins S9 and S11.

One of the primary rRNA binding proteins, it binds directly to 16S rRNA where it nucleates assembly of the head domain of the 30S subunit. Is located at the subunit interface close to the decoding center, probably blocks exit of the E-site tRNA. In Thioalkalivibrio sulfidiphilus (strain HL-EbGR7), this protein is Small ribosomal subunit protein uS7.